The following is a 546-amino-acid chain: ATP synthase subunit alpha (546 aa).

Position 172–179 (172–179 (GDRKTGKT)) interacts with ATP. Composition is skewed to polar residues over residues 511-520 (FRTTEGNNLG) and 536-546 (TELNVSRKTAK). The disordered stretch occupies residues 511–546 (FRTTEGNNLGTEAPVDPLAADDVNKTELNVSRKTAK).

It belongs to the ATPase alpha/beta chains family. F-type ATPases have 2 components, CF(1) - the catalytic core - and CF(0) - the membrane proton channel. CF(1) has five subunits: alpha(3), beta(3), gamma(1), delta(1), epsilon(1). CF(0) has three main subunits: a(1), b(2) and c(9-12). The alpha and beta chains form an alternating ring which encloses part of the gamma chain. CF(1) is attached to CF(0) by a central stalk formed by the gamma and epsilon chains, while a peripheral stalk is formed by the delta and b chains.

The protein localises to the cell membrane. The enzyme catalyses ATP + H2O + 4 H(+)(in) = ADP + phosphate + 5 H(+)(out). Produces ATP from ADP in the presence of a proton gradient across the membrane. The alpha chain is a regulatory subunit. The polypeptide is ATP synthase subunit alpha (Corynebacterium aurimucosum (strain ATCC 700975 / DSM 44827 / CIP 107346 / CN-1) (Corynebacterium nigricans)).